We begin with the raw amino-acid sequence, 260 residues long: uncharacterized protein (260 aa).

A signal peptide spans M1–G22. The N-palmitoyl cysteine moiety is linked to residue C23. C23 carries S-diacylglycerol cysteine lipidation.

Belongs to the staphylococcal tandem lipoprotein family.

Its subcellular location is the cell membrane. This is an uncharacterized protein from Staphylococcus epidermidis (strain ATCC 35984 / DSM 28319 / BCRC 17069 / CCUG 31568 / BM 3577 / RP62A).